The primary structure comprises 135 residues: Protein NrdI (135 aa).

This sequence belongs to the NrdI family.

Functionally, probably involved in ribonucleotide reductase function. The protein is Protein NrdI of Brucella abortus (strain S19).